Here is a 151-residue protein sequence, read N- to C-terminus: Regulatory protein RecX (151 aa).

The protein belongs to the RecX family.

The protein localises to the cytoplasm. Functionally, modulates RecA activity. The sequence is that of Regulatory protein RecX from Actinobacillus pleuropneumoniae serotype 5b (strain L20).